Here is a 290-residue protein sequence, read N- to C-terminus: Release factor glutamine methyltransferase (290 aa).

Residues D140 and N181 each contribute to the S-adenosyl-L-methionine site. Residue 181 to 184 (NPPY) participates in substrate binding.

Belongs to the protein N5-glutamine methyltransferase family. PrmC subfamily.

The catalysed reaction is L-glutaminyl-[peptide chain release factor] + S-adenosyl-L-methionine = N(5)-methyl-L-glutaminyl-[peptide chain release factor] + S-adenosyl-L-homocysteine + H(+). In terms of biological role, methylates the class 1 translation termination release factors RF1/PrfA and RF2/PrfB on the glutamine residue of the universally conserved GGQ motif. The protein is Release factor glutamine methyltransferase of Chlamydia trachomatis serovar D (strain ATCC VR-885 / DSM 19411 / UW-3/Cx).